Consider the following 1500-residue polypeptide: Carbamoyl-phosphate synthase [ammonia], mitochondrial (1500 aa).

The transit peptide at 1–38 (MTRILTAFKVVRTLKTGFGFTNVTAHQKWKFSRPGIRL) directs the protein to the mitochondrion. Residues 39-218 (LSVKAQTAHI…VKVYGKGNPT (180 aa)) are anthranilate phosphoribosyltransferase homolog. K55, K57, and K119 each carry N6-acetyllysine; alternate. At K55 the chain carries N6-glutaryllysine; alternate. K55, K57, and K119 each carry N6-succinyllysine; alternate. S148 is modified (phosphoserine). An N6-acetyllysine; alternate mark is found at K157 and K171. K157 is modified (N6-succinyllysine; alternate). K171 carries the post-translational modification N6-glutaryllysine; alternate. Position 176 is an N6-glutaryllysine (K176). N6-acetyllysine occurs at positions 182 and 197. An N6-acetyllysine; alternate mark is found at K207, K210, K214, K219, and K228. 5 positions are modified to N6-glutaryllysine; alternate: K207, K210, K214, K219, and K228. At K207 the chain carries N6-succinyllysine; alternate. Residue K214 is modified to N6-succinyllysine; alternate. In terms of domain architecture, Glutamine amidotransferase type-1 spans 219–404 (KVVAVDCGIK…FSLIKKGKAT (186 aa)). K237 bears the N6-glutaryllysine mark. N6-acetyllysine; alternate is present on residues K280, K287, K307, and K310. K280 carries the N6-glutaryllysine; alternate modification. 2 positions are modified to N6-succinyllysine; alternate: K287 and K307. 2 positions are modified to N6-glutaryllysine; alternate: K307 and K310. K400 bears the N6-succinyllysine mark. An N6-glutaryllysine; alternate mark is found at K402, K412, K453, and K458. N6-succinyllysine; alternate occurs at positions 402 and 412. 6 positions are modified to N6-acetyllysine; alternate: K412, K453, K458, K522, K527, and K532. N6-succinyllysine; alternate is present on residues K458, K522, and K527. 2 positions are modified to N6-glutaryllysine; alternate: K527 and K532. At S537 the chain carries Phosphoserine; alternate. S537 carries O-linked (GlcNAc) serine; alternate glycosylation. Phosphoserine is present on S540. Residues 551–743 (SDKLNEINEK…LAFIAAKIAL (193 aa)) form the ATP-grasp 1 domain. N6-acetyllysine; alternate is present on residues K553 and K560. The residue at position 553 (K553) is an N6-glutaryllysine; alternate. 2 positions are modified to N6-succinyllysine; alternate: K553 and K560. S569 carries the post-translational modification Phosphoserine. K575 and K612 each carry N6-acetyllysine; alternate. N6-succinyllysine; alternate is present on residues K575 and K612. K630 carries the post-translational modification N6-acetyllysine. An N6-glutaryllysine modification is found at K728. K751, K757, K772, K793, K811, and K831 each carry N6-acetyllysine; alternate. 2 positions are modified to N6-succinyllysine; alternate: K751 and K757. 4 positions are modified to N6-glutaryllysine; alternate: K757, K772, K793, and K811. K793 is subject to N6-succinyllysine; alternate. At K831 the chain carries N6-succinyllysine; alternate. At S835 the chain carries Phosphoserine. N6-acetyllysine; alternate occurs at positions 841 and 856. 2 positions are modified to N6-glutaryllysine; alternate: K841 and K856. The residue at position 869 (K869) is an N6-glutaryllysine. N6-acetyllysine; alternate is present on residues K875, K889, and K892. Residues K875, K889, and K892 each carry the N6-glutaryllysine; alternate modification. 3 positions are modified to N6-succinyllysine; alternate: K875, K889, and K892. Phosphoserine is present on residues S896 and S898. The residue at position 905 (K905) is an N6-glutaryllysine. N6-acetyllysine; alternate is present on residues K908, K915, and K919. 3 positions are modified to N6-glutaryllysine; alternate: K908, K915, and K919. 2 positions are modified to N6-succinyllysine; alternate: K915 and K919. K935 bears the N6-acetyllysine mark. A Phosphoserine modification is found at S1036. An N6-acetyllysine; alternate modification is found at K1074. K1074 bears the N6-glutaryllysine; alternate mark. At K1074 the chain carries N6-succinyllysine; alternate. A phosphoserine mark is found at S1079, S1090, and S1093. Residues 1093 to 1284 (SAVLDELKVA…FIDVATKVMI (192 aa)) form the ATP-grasp 2 domain. The residue at position 1100 (K1100) is an N6-acetyllysine; alternate. Residue K1100 is modified to N6-succinyllysine; alternate. K1149 is subject to N6-succinyllysine. K1150 is modified (N6-glutaryllysine). N6-acetyllysine; alternate occurs at positions 1168 and 1183. Residues K1168 and K1183 each carry the N6-glutaryllysine; alternate modification. An N6-succinyllysine; alternate mark is found at K1168 and K1183. A Phosphoserine modification is found at S1203. The residue at position 1222 (K1222) is an N6-acetyllysine. K1224 carries the post-translational modification N6-glutaryllysine. N6-acetyllysine; alternate occurs at positions 1232, 1269, and 1291. K1232, K1269, and K1291 each carry N6-succinyllysine; alternate. Residue S1331 is glycosylated (O-linked (GlcNAc) serine). A glycan (O-linked (GlcNAc) threonine) is linked at T1332. Positions 1355–1500 (FKIPQKGILI…YRQYSAGKAA (146 aa)) constitute an MGS-like domain. The residue at position 1356 (K1356) is an N6-acetyllysine; alternate. Residues K1356 and K1360 each carry the N6-glutaryllysine; alternate modification. Residues K1356 and K1360 each carry the N6-succinyllysine; alternate modification. T1391, T1394, and W1410 together coordinate N-acetyl-L-glutamate. Phosphoserine occurs at positions 1419 and 1431. N-acetyl-L-glutamate-binding residues include N1437 and N1440. K1444 carries the N6-acetyllysine; alternate modification. Residue K1444 is modified to N6-succinyllysine; alternate. Position 1449 (N1449) interacts with N-acetyl-L-glutamate. N6-acetyllysine; alternate is present on residues K1471, K1479, and K1486. Residues K1471, K1479, and K1486 each carry the N6-succinyllysine; alternate modification. K1479 and K1486 each carry N6-glutaryllysine; alternate.

Can form homooligomers (monomers as predominant form and dimers). In terms of processing, undergoes proteolytic cleavage in the C-terminal region corresponding to the loss of approximately 12 AA residues from the C-terminus. Succinylated at Lys-287 and Lys-1291. Desuccinylated at Lys-1291 by SIRT5, leading to activation. Post-translationally, glutarylated. Glutarylation levels increase during fasting. Deglutarylated by SIRT5 at Lys-55, Lys-219, Lys-412, Lys-889, Lys-892, Lys-915, Lys-1360 and Lys-1486, leading to activation. In terms of tissue distribution, primarily in the liver and small intestine.

It is found in the mitochondrion. The protein localises to the nucleus. The protein resides in the nucleolus. Its subcellular location is the cell membrane. The catalysed reaction is hydrogencarbonate + NH4(+) + 2 ATP = carbamoyl phosphate + 2 ADP + phosphate + 2 H(+). Requires N-acetyl-L-glutamate (NAG) as an allosteric activator. Activated by glycerol in the absence of NAG, whereas in the presence of NAG it is inhibited by increasing concentrations of glycerol. Functionally, involved in the urea cycle of ureotelic animals where the enzyme plays an important role in removing excess ammonia from the cell. This is Carbamoyl-phosphate synthase [ammonia], mitochondrial (CPS1) from Homo sapiens (Human).